Consider the following 252-residue polypeptide: Probable endonuclease 4 (252 aa).

Zn(2+)-binding residues include histidine 56, histidine 96, glutamate 129, aspartate 162, histidine 165, histidine 191, aspartate 204, histidine 206, and glutamate 233.

This sequence belongs to the AP endonuclease 2 family. Zn(2+) serves as cofactor.

The catalysed reaction is Endonucleolytic cleavage to 5'-phosphooligonucleotide end-products.. Its function is as follows. Endonuclease IV plays a role in DNA repair. It cleaves phosphodiester bonds at apurinic or apyrimidinic (AP) sites, generating a 3'-hydroxyl group and a 5'-terminal sugar phosphate. This is Probable endonuclease 4 from Mycobacterium tuberculosis (strain ATCC 25177 / H37Ra).